We begin with the raw amino-acid sequence, 523 residues long: Magnesium/proton exchanger 1 (523 aa).

11 helical membrane passes run 24 to 44 (LLPIGVRAFIYTAVLAYCFIG), 88 to 108 (IADVALLAFGTSFPQISLATI), 125 to 145 (GTLVGSAAFDLFPIHAVCVVM), 157 to 177 (LGVWLVELFWSFWAYIWLYII), 185 to 205 (VITLWEALLTVLQYGLLLLHA), 325 to 345 (VIGISWNLIIAPWKMLFAFVP), 349 to 369 (IAHGWIAFICSLIFISGIAYG), 377 to 397 (ISCVTGVSPYVIAFTALAAGT), 428 to 448 (VNIYVGIGVPWLVDTMYNYFV), 461 to 481 (LSFSLLVFFATSFGCITVLVL), and 495 to 515 (MWAWATSVYFMILWVVFVVLS).

The protein belongs to the Ca(2+):cation antiporter (CaCA) (TC 2.A.19) family. MHX subfamily.

Its subcellular location is the vacuole membrane. Vacuolar transporter that exchanges protons with Mg(2+), Zn(2+) and Fe(2+) ions. May control the partitioning of Mg(2+) and Zn(2+) between plant organs. The chain is Magnesium/proton exchanger 1 (MHX1) from Oryza sativa subsp. japonica (Rice).